The sequence spans 702 residues: Polyphosphate kinase (702 aa).

N55 is an ATP binding site. 2 residues coordinate Mg(2+): R389 and R419. H449 serves as the catalytic Phosphohistidine intermediate. ATP-binding residues include Y482, R578, and H606.

It belongs to the polyphosphate kinase 1 (PPK1) family. The cofactor is Mg(2+). An intermediate of this reaction is the autophosphorylated ppk in which a phosphate is covalently linked to a histidine residue through a N-P bond.

It carries out the reaction [phosphate](n) + ATP = [phosphate](n+1) + ADP. Catalyzes the reversible transfer of the terminal phosphate of ATP to form a long-chain polyphosphate (polyP). This chain is Polyphosphate kinase, found in Bacillus anthracis.